Consider the following 93-residue polypeptide: Small ribosomal subunit protein uS19 (93 aa).

Belongs to the universal ribosomal protein uS19 family.

Protein S19 forms a complex with S13 that binds strongly to the 16S ribosomal RNA. In Parafrankia sp. (strain EAN1pec), this protein is Small ribosomal subunit protein uS19.